An 862-amino-acid chain; its full sequence is Eukaryotic translation initiation factor 3 subunit C (862 aa).

The interval 1–81 is disordered; it reads MSSRFFYGGG…EEEEKVTVVK (81 aa). The span at 17–54 shows a compositional bias: acidic residues; the sequence is SSDEEELYSDREEEEKSEEEESSEEEDETSEEEESDEE. Basic and acidic residues predominate over residues 55–65; the sequence is TGARKFLKDVA. A compositionally biased stretch (acidic residues) spans 66–75; that stretch reads SDSEEEEEEE. Residues 600–774 enclose the PCI domain; sequence FHMHINLELL…NAIVFRKGVE (175 aa). The segment at 813–862 is disordered; that stretch reads RDQGAGARGGRGSGRGGQARGGPRFPGGQQGRRPGGQQFGGGALGGAIKA. Positions 818-862 are enriched in gly residues; sequence GARGGRGSGRGGQARGGPRFPGGQQGRRPGGQQFGGGALGGAIKA.

The protein belongs to the eIF-3 subunit C family. In terms of assembly, component of the eukaryotic translation initiation factor 3 (eIF-3) complex.

Its subcellular location is the cytoplasm. Its function is as follows. Component of the eukaryotic translation initiation factor 3 (eIF-3) complex, which is involved in protein synthesis of a specialized repertoire of mRNAs and, together with other initiation factors, stimulates binding of mRNA and methionyl-tRNAi to the 40S ribosome. The eIF-3 complex specifically targets and initiates translation of a subset of mRNAs involved in cell proliferation. This Aspergillus fumigatus (strain CBS 144.89 / FGSC A1163 / CEA10) (Neosartorya fumigata) protein is Eukaryotic translation initiation factor 3 subunit C (nip1).